We begin with the raw amino-acid sequence, 143 residues long: MKLNTLAPAAGSKSAPKRLGRGIGSGLGKTSGKGHKGQKARSGGYHKVGFEGGQMPLQRRLPKFGFTSASKRYVAEIRLHELNNVVADEVTLDTLKDFGLIRKDIKTVKVIASGEIQKAVSLKGIACTKGAKEAIEKAGGKVE.

The interval 1 to 52 is disordered; it reads MKLNTLAPAAGSKSAPKRLGRGIGSGLGKTSGKGHKGQKARSGGYHKVGFEG. Residues 21 to 31 are compositionally biased toward gly residues; that stretch reads RGIGSGLGKTS.

Belongs to the universal ribosomal protein uL15 family. Part of the 50S ribosomal subunit.

In terms of biological role, binds to the 23S rRNA. The sequence is that of Large ribosomal subunit protein uL15 from Francisella tularensis subsp. novicida (strain U112).